The chain runs to 155 residues: Small ribosomal subunit protein uS7c (155 aa).

Belongs to the universal ribosomal protein uS7 family. Part of the 30S ribosomal subunit.

It is found in the plastid. The protein resides in the chloroplast. Its function is as follows. One of the primary rRNA binding proteins, it binds directly to 16S rRNA where it nucleates assembly of the head domain of the 30S subunit. In Ananas comosus (Pineapple), this protein is Small ribosomal subunit protein uS7c (rps7).